A 121-amino-acid polypeptide reads, in one-letter code: Large ribosomal subunit protein eL18 (121 aa).

Belongs to the eukaryotic ribosomal protein eL18 family. In terms of assembly, part of the 50S ribosomal subunit.

The chain is Large ribosomal subunit protein eL18 from Thermococcus kodakarensis (strain ATCC BAA-918 / JCM 12380 / KOD1) (Pyrococcus kodakaraensis (strain KOD1)).